A 506-amino-acid chain; its full sequence is Squalene monooxygenase 1,1 (506 aa).

Helical transmembrane passes span 3–23 (LAFPHVCLWTLLAFVLTWTVF) and 47–67 (DADVIIVGAGVGGSALAYALA). FAD-binding positions include 57–58 (VG), 77–78 (ER), R85, F90, R157, V173, D336, and M349. The chain crosses the membrane as a helical span at residues 447–467 (LIFHLCGITLSSIGQLLSPFP).

Belongs to the squalene monooxygenase family. The cofactor is FAD.

The protein resides in the membrane. The catalysed reaction is squalene + reduced [NADPH--hemoprotein reductase] + O2 = (S)-2,3-epoxysqualene + oxidized [NADPH--hemoprotein reductase] + H2O + H(+). Its pathway is terpene metabolism; lanosterol biosynthesis; lanosterol from farnesyl diphosphate: step 2/3. In terms of biological role, catalyzes the stereospecific oxidation of squalene to (S)-2,3-epoxysqualene, and is considered to be a rate-limiting enzyme in steroid biosynthesis. This Brassica napus (Rape) protein is Squalene monooxygenase 1,1 (SQP1,1).